Reading from the N-terminus, the 634-residue chain is Probable LRR receptor-like serine/threonine-protein kinase At2g23950 (634 aa).

The signal sequence occupies residues 1–27 (MVVMKLITMKIFSVLLLLCFFVTCSLS). The Extracellular segment spans residues 28 to 236 (SEPRNPEVEA…SSGRRTNILA (209 aa)). Asn-96 and Asn-109 each carry an N-linked (GlcNAc...) asparagine glycan. LRR repeat units lie at residues 99–121 (NLRQ…ICSL), 123–145 (KLQT…VNQL), 147–167 (NLQY…ASLS), and 171–193 (HLSF…PART). The N-linked (GlcNAc...) asparagine glycan is linked to Asn-155. Residues 237–257 (VALGVSLGFAVSVILSLGFIW) form a helical membrane-spanning segment. The Cytoplasmic portion of the chain corresponds to 258-634 (YRKKQRRLTM…SFAMELSGPR (377 aa)). At Thr-296 the chain carries Phosphothreonine. One can recognise a Protein kinase domain in the interval 299-554 (FSSKSILGAG…QVALLCTQFL (256 aa)). Residue 305–313 (LGAGGFGNV) coordinates ATP. Thr-322 is modified (phosphothreonine). Lys-327 is an ATP binding site. Ser-380 and Ser-383 each carry phosphoserine. Position 395 is a phosphothreonine (Thr-395). Asp-422 (proton acceptor) is an active-site residue. Thr-455, Thr-456, and Thr-461 each carry phosphothreonine. Tyr-469 bears the Phosphotyrosine mark. Ser-471 bears the Phosphoserine mark. Thr-472 is modified (phosphothreonine). Ser-476 carries the phosphoserine modification. A Phosphothreonine modification is found at Thr-551.

Belongs to the protein kinase superfamily. Ser/Thr protein kinase family.

The protein localises to the membrane. It carries out the reaction L-seryl-[protein] + ATP = O-phospho-L-seryl-[protein] + ADP + H(+). The catalysed reaction is L-threonyl-[protein] + ATP = O-phospho-L-threonyl-[protein] + ADP + H(+). In Arabidopsis thaliana (Mouse-ear cress), this protein is Probable LRR receptor-like serine/threonine-protein kinase At2g23950.